Here is a 1944-residue protein sequence, read N- to C-terminus: Anaphase-promoting complex subunit 1 (1944 aa).

4 positions are modified to phosphoserine: serine 51, serine 60, serine 202, and serine 286. Residue threonine 291 is modified to Phosphothreonine. A disordered region spans residues 305–343 (LRSLSKGDSPVTSPFQNYSSIHSQSRSTSSPSLHSRSPS). Serine 313, serine 341, serine 343, serine 355, serine 362, serine 373, and serine 377 each carry phosphoserine. The segment covering 323-343 (SSIHSQSRSTSSPSLHSRSPS) has biased composition (low complexity). The segment at 373-396 (SHNQSPKRHSISHSPNSNSNGSFL) is disordered. A compositionally biased stretch (low complexity) spans 384 to 394 (SHSPNSNSNGS). A Phosphothreonine modification is found at threonine 537. Phosphoserine occurs at positions 547 and 555. Residue tyrosine 571 is modified to Phosphotyrosine. Residues serine 686, serine 688, and serine 916 each carry the phosphoserine modification. Residues 994–1016 (KGKSVLSSDVPSGTETEEEDDGM) form a disordered region. Over residues 998-1007 (VLSSDVPSGT) the composition is skewed to polar residues. PC repeat units lie at residues 1297–1325 (AAGLALGMVCLGHGSNLIGMSDLNVPEQL), 1366–1404 (GATLALAMIYLKTNNRSIADWLRAPDTMYLLDFVKPEFL), 1467–1501 (GACLSLGFRFAGSENLSAFNCLHKFAKDFMTYLSA), and 1520–1552 (LLSLAMVMAGSGNLKVLQLCRFLHMKTGGEMNY).

It belongs to the APC1 family. The mammalian APC/C is composed at least of 14 distinct subunits ANAPC1, ANAPC2, CDC27/APC3, ANAPC4, ANAPC5, CDC16/APC6, ANAPC7, CDC23/APC8, ANAPC10, ANAPC11, CDC26/APC12, ANAPC13, ANAPC15 and ANAPC16 that assemble into a complex of at least 19 chains with a combined molecular mass of around 1.2 MDa; APC/C interacts with FZR1 and FBXO5. In terms of processing, phosphorylated. Phosphorylation on Ser-355 occurs specifically during mitosis.

Its pathway is protein modification; protein ubiquitination. Its function is as follows. Component of the anaphase promoting complex/cyclosome (APC/C), a cell cycle-regulated E3 ubiquitin ligase that controls progression through mitosis and the G1 phase of the cell cycle. The APC/C complex acts by mediating ubiquitination and subsequent degradation of target proteins: it mainly mediates the formation of 'Lys-11'-linked polyubiquitin chains and, to a lower extent, the formation of 'Lys-48'- and 'Lys-63'-linked polyubiquitin chains. The APC/C complex catalyzes assembly of branched 'Lys-11'-/'Lys-48'-linked branched ubiquitin chains on target proteins. In Homo sapiens (Human), this protein is Anaphase-promoting complex subunit 1 (ANAPC1).